The sequence spans 329 residues: Acetyl-coenzyme A carboxylase carboxyl transferase subunit alpha (329 aa).

The CoA carboxyltransferase C-terminal domain occupies 40-294; it reads QLETLAARRR…KTSILRHLTE (255 aa).

Belongs to the AccA family. Acetyl-CoA carboxylase is a heterohexamer composed of biotin carboxyl carrier protein (AccB), biotin carboxylase (AccC) and two subunits each of ACCase subunit alpha (AccA) and ACCase subunit beta (AccD).

It is found in the cytoplasm. It carries out the reaction N(6)-carboxybiotinyl-L-lysyl-[protein] + acetyl-CoA = N(6)-biotinyl-L-lysyl-[protein] + malonyl-CoA. It functions in the pathway lipid metabolism; malonyl-CoA biosynthesis; malonyl-CoA from acetyl-CoA: step 1/1. In terms of biological role, component of the acetyl coenzyme A carboxylase (ACC) complex. First, biotin carboxylase catalyzes the carboxylation of biotin on its carrier protein (BCCP) and then the CO(2) group is transferred by the carboxyltransferase to acetyl-CoA to form malonyl-CoA. The chain is Acetyl-coenzyme A carboxylase carboxyl transferase subunit alpha from Prochlorococcus marinus (strain SARG / CCMP1375 / SS120).